A 490-amino-acid polypeptide reads, in one-letter code: GTPase Der (490 aa).

EngA-type G domains are found at residues 3–166 (PVVA…MEDL) and 203–376 (IKLA…DSST). Residues 9-16 (GRPNVGKS), 56-60 (DTGGI), 118-121 (NKTD), 209-216 (GRPNVGKS), 256-260 (DTAGV), and 321-324 (NKWD) each bind GTP. Residues 377 to 461 (RRVGTSMLTR…PIRIQFKEGE (85 aa)) form the KH-like domain.

Belongs to the TRAFAC class TrmE-Era-EngA-EngB-Septin-like GTPase superfamily. EngA (Der) GTPase family. Associates with the 50S ribosomal subunit.

Its function is as follows. GTPase that plays an essential role in the late steps of ribosome biogenesis. This Escherichia coli O81 (strain ED1a) protein is GTPase Der.